Here is a 319-residue protein sequence, read N- to C-terminus: Acetyl-coenzyme A carboxylase carboxyl transferase subunit alpha (319 aa).

The region spanning 35 to 296 (DLDKEIEQLE…KATLVANLAE (262 aa)) is the CoA carboxyltransferase C-terminal domain.

It belongs to the AccA family. In terms of assembly, acetyl-CoA carboxylase is a heterohexamer composed of biotin carboxyl carrier protein (AccB), biotin carboxylase (AccC) and two subunits each of ACCase subunit alpha (AccA) and ACCase subunit beta (AccD).

The protein resides in the cytoplasm. It carries out the reaction N(6)-carboxybiotinyl-L-lysyl-[protein] + acetyl-CoA = N(6)-biotinyl-L-lysyl-[protein] + malonyl-CoA. The protein operates within lipid metabolism; malonyl-CoA biosynthesis; malonyl-CoA from acetyl-CoA: step 1/1. In terms of biological role, component of the acetyl coenzyme A carboxylase (ACC) complex. First, biotin carboxylase catalyzes the carboxylation of biotin on its carrier protein (BCCP) and then the CO(2) group is transferred by the carboxyltransferase to acetyl-CoA to form malonyl-CoA. The protein is Acetyl-coenzyme A carboxylase carboxyl transferase subunit alpha of Photobacterium profundum (strain SS9).